The chain runs to 508 residues: MALPWYRVHTVVLNDPGRLIAVHLMHTALVSGWAGSMALYELAVFDPSDPILDPMWRQGMFVIPFMTRLGVTKSWGGWSITGETITNAGLWSYEGVAATHIILSGLLFLAAIWHWVYWDLELFRDERTGKPSLDLPKIFGIHLFLSGVLCFGFGAFHVTGLFGPGIWVSDPYGLTGNVQPVIPAWGAEGFDPFNPGGIASHHIAAGILGIIAGLFHLSVRPPQRLYKGLRMGNIETVLSSSIAAVFWAAFVVAGTMWYGSAATPVELFGPTRYQWDQGYFQQEIERRIRTSLDEGLSLSEAWSKIPEKLAFYDYIGNNPAKGGLFRAGAMDNGDGIAVGWLGHAVFKDKEGNELFVRRMPTFFETFPVVLLDKDGVVRADVPFRRAESKYSIEQVGVSVEFYGGELNGVSFSDPATVKKYARRAQLGEIFEFDRATLKSDGVFRSSPRGWFTFGHANFALLFFFGHIWHGSRTLFRDVFSGIDPDLESQVEFGLFQKLGDPTTRKQAV.

6 helical membrane passes run 21 to 36, 101 to 115, 140 to 156, 203 to 218, 237 to 252, and 457 to 472; these read AVHL…WAGS, IILS…IWHW, GIHL…FGAF, IAAG…FHLS, VLSS…AFVV, and NFAL…HGSR.

It belongs to the PsbB/PsbC family. PsbB subfamily. In terms of assembly, PSII is composed of 1 copy each of membrane proteins PsbA, PsbB, PsbC, PsbD, PsbE, PsbF, PsbH, PsbI, PsbJ, PsbK, PsbL, PsbM, PsbT, PsbX, PsbY, PsbZ, Psb30/Ycf12, at least 3 peripheral proteins of the oxygen-evolving complex and a large number of cofactors. It forms dimeric complexes. Binds multiple chlorophylls. PSII binds additional chlorophylls, carotenoids and specific lipids. is required as a cofactor.

The protein localises to the plastid. Its subcellular location is the chloroplast thylakoid membrane. One of the components of the core complex of photosystem II (PSII). It binds chlorophyll and helps catalyze the primary light-induced photochemical processes of PSII. PSII is a light-driven water:plastoquinone oxidoreductase, using light energy to abstract electrons from H(2)O, generating O(2) and a proton gradient subsequently used for ATP formation. The polypeptide is Photosystem II CP47 reaction center protein (Staurastrum punctulatum (Green alga)).